The following is a 150-amino-acid chain: uncharacterized protein (150 aa).

This is an uncharacterized protein from Bacillus subtilis (strain 168).